The following is a 214-amino-acid chain: MIIVLLGAPGAGKGTQSVLVAEKYGLKHISTGDLLREEIANNTELGKQAKKLIDGGNLVPDEMILGLLKNAFLNRGKGVVLDGFPRTLSQAEMMHPIVKGLAEKLSAVINIKLSEDEITQRIVLRRQCKNCGNIFNLRFIKNFDGKCPKCGSTDIYQRADDNEESAKNRINVYHSQTEPVVGFYKNKTYYKEVDGSKNKEEVFEEISKFINRKK.

10-15 (GAGKGT) lines the ATP pocket. Positions 30-59 (STGDLLREEIANNTELGKQAKKLIDGGNLV) are NMP. Residues threonine 31, arginine 36, 57-59 (NLV), 83-86 (GFPR), and glutamine 90 each bind AMP. An LID region spans residues 124–161 (LRRQCKNCGNIFNLRFIKNFDGKCPKCGSTDIYQRADD). Arginine 125 lines the ATP pocket. Zn(2+) is bound by residues cysteine 128 and cysteine 131. Residue 134 to 135 (IF) coordinates ATP. Zn(2+)-binding residues include cysteine 147 and cysteine 150. Residues arginine 158 and arginine 169 each coordinate AMP. Lysine 197 is a binding site for ATP.

It belongs to the adenylate kinase family. Monomer.

The protein localises to the cytoplasm. The enzyme catalyses AMP + ATP = 2 ADP. Its pathway is purine metabolism; AMP biosynthesis via salvage pathway; AMP from ADP: step 1/1. In terms of biological role, catalyzes the reversible transfer of the terminal phosphate group between ATP and AMP. Plays an important role in cellular energy homeostasis and in adenine nucleotide metabolism. The chain is Adenylate kinase from Elusimicrobium minutum (strain Pei191).